A 117-amino-acid chain; its full sequence is Large ribosomal subunit protein bL20 (117 aa).

Belongs to the bacterial ribosomal protein bL20 family.

In terms of biological role, binds directly to 23S ribosomal RNA and is necessary for the in vitro assembly process of the 50S ribosomal subunit. It is not involved in the protein synthesizing functions of that subunit. The sequence is that of Large ribosomal subunit protein bL20 from Pasteurella multocida (strain Pm70).